Consider the following 370-residue polypeptide: L-lysine 4-hydroxylase (370 aa).

Residues histidine 176, glutamate 178, and histidine 310 each contribute to the Fe cation site.

It belongs to the clavaminate synthase family. The cofactor is Fe(2+).

It catalyses the reaction L-lysine + 2-oxoglutarate + O2 = (4R)-4-hydroxy-L-lysine + succinate + CO2. Its function is as follows. Alpha-ketoglutarate-dependent dioxygenase that in vitro catalyzes the regio- and stereoselective hydroxylation of L-lysine, leading to (4R)-4-hydroxy-L-lysine. To a lesser extent, can also use (3S)-3-hydroxy-L-lysine as substrate, producing the dihydroxylated product (3R,4R)-3,4-hydroxy-L-lysine. Cannot use D-lysine or L-ornithine as substrate. This chain is L-lysine 4-hydroxylase, found in Flavobacterium johnsoniae (strain ATCC 17061 / DSM 2064 / JCM 8514 / BCRC 14874 / CCUG 350202 / NBRC 14942 / NCIMB 11054 / UW101) (Cytophaga johnsonae).